Reading from the N-terminus, the 188-residue chain is UPF0397 protein LCK_00164 (188 aa).

A run of 5 helical transmembrane segments spans residues V15 to P35, G48 to I68, G79 to G99, W121 to I141, and A154 to A174.

Belongs to the UPF0397 family.

It localises to the cell membrane. The chain is UPF0397 protein LCK_00164 from Leuconostoc citreum (strain KM20).